A 212-amino-acid chain; its full sequence is Golgi SNAP receptor complex member 2 homolog memb-1 (212 aa).

Over 1 to 189 the chain is Cytoplasmic; it reads MEAQYQSTNF…QVIDRRVRED (189 aa). The helical; Anchor for type IV membrane protein transmembrane segment at 190-210 threads the bilayer; it reads WIFVIGCIVCCIFMYAFYRFW. Residues 211–212 are Vesicular-facing; sequence RG.

The protein belongs to the GOSR2 family. As to quaternary structure, part of a unique SNARE complex.

It localises to the golgi apparatus. It is found in the cis-Golgi network membrane. Its subcellular location is the golgi apparatus membrane. The protein resides in the endoplasmic reticulum membrane. Involved in transport of proteins from the cis/medial-Golgi to the trans-Golgi network. In Caenorhabditis briggsae, this protein is Golgi SNAP receptor complex member 2 homolog memb-1.